We begin with the raw amino-acid sequence, 253 residues long: Major prion protein (253 aa).

The N-terminal stretch at 1-22 (MANLGCWMLVLFVATWSDLGLC) is a signal peptide. The tract at residues 23–38 (KKRPKPGGWNTGGSRY) is interaction with ADGRG6. Residues 23 to 230 (KKRPKPGGWN…ESQAYYQRGS (208 aa)) form an interaction with GRB2, ERI3 and SYN1 region. A disordered region spans residues 26–108 (PKPGGWNTGG…WNKPSKPKTN (83 aa)). Tandem repeats lie at residues 51-59 (PQGGGGWGQ), 60-67 (PHGGGWGQ), 68-75 (PHGGGWGQ), 76-83 (PHGGGWGQ), and 84-91 (PHGGGWGQ). The 5 X 8 AA tandem repeats of P-H-G-G-G-W-G-Q stretch occupies residues 51–91 (PQGGGGWGQPHGGGWGQPHGGGWGQPHGGGWGQPHGGGWGQ). Positions 52–95 (QGGGGWGQPHGGGWGQPHGGGWGQPHGGGWGQPHGGGWGQGGGT) are enriched in gly residues. Cu(2+) contacts are provided by histidine 61, glycine 62, glycine 63, histidine 69, glycine 70, glycine 71, histidine 77, glycine 78, glycine 79, histidine 85, glycine 86, and glycine 87. An intrachain disulfide couples cysteine 179 to cysteine 214. Asparagine 181 and asparagine 197 each carry an N-linked (GlcNAc...) asparagine glycan. Residue serine 230 is the site of GPI-anchor amidated serine attachment. Positions 231–253 (SMVLFSSPPVILLISFLIFLIVG) are cleaved as a propeptide — removed in mature form.

It belongs to the prion family. As to quaternary structure, monomer and homodimer. Has a tendency to aggregate into amyloid fibrils containing a cross-beta spine, formed by a steric zipper of superposed beta-strands. Soluble oligomers may represent an intermediate stage on the path to fibril formation. Copper binding may promote oligomerization. Interacts with GRB2, APP, ERI3/PRNPIP and SYN1. Mislocalized cytosolically exposed PrP interacts with MGRN1; this interaction alters MGRN1 subcellular location and causes lysosomal enlargement. Interacts with KIAA1191. Interacts with ADGRG6. The glycosylation pattern (the amount of mono-, di- and non-glycosylated forms or glycoforms) seems to differ in normal and CJD prion.

Its subcellular location is the cell membrane. The protein resides in the golgi apparatus. Its function is as follows. Its primary physiological function is unclear. May play a role in neuronal development and synaptic plasticity. May be required for neuronal myelin sheath maintenance. May promote myelin homeostasis through acting as an agonist for ADGRG6 receptor. May play a role in iron uptake and iron homeostasis. Soluble oligomers are toxic to cultured neuroblastoma cells and induce apoptosis (in vitro). Association with GPC1 (via its heparan sulfate chains) targets PRNP to lipid rafts. Also provides Cu(2+) or Zn(2+) for the ascorbate-mediated GPC1 deaminase degradation of its heparan sulfate side chains. The protein is Major prion protein (PRNP) of Homo sapiens (Human).